The following is a 117-amino-acid chain: Large ribosomal subunit protein bL19 (117 aa).

It belongs to the bacterial ribosomal protein bL19 family.

This protein is located at the 30S-50S ribosomal subunit interface and may play a role in the structure and function of the aminoacyl-tRNA binding site. In Shewanella sediminis (strain HAW-EB3), this protein is Large ribosomal subunit protein bL19.